The sequence spans 37 residues: Cytochrome b6-f complex subunit 5 (37 aa).

A helical transmembrane segment spans residues 5–25; that stretch reads SLFGIVLGLIPITLAGLFVTA.

This sequence belongs to the PetG family. As to quaternary structure, the 4 large subunits of the cytochrome b6-f complex are cytochrome b6, subunit IV (17 kDa polypeptide, PetD), cytochrome f and the Rieske protein, while the 4 small subunits are PetG, PetL, PetM and PetN. The complex functions as a dimer.

It localises to the plastid. The protein localises to the chloroplast thylakoid membrane. Component of the cytochrome b6-f complex, which mediates electron transfer between photosystem II (PSII) and photosystem I (PSI), cyclic electron flow around PSI, and state transitions. PetG is required for either the stability or assembly of the cytochrome b6-f complex. This is Cytochrome b6-f complex subunit 5 from Arabis hirsuta (Hairy rock-cress).